The primary structure comprises 254 residues: Splicing factor tls1 (254 aa).

Positions 69-83 are enriched in basic and acidic residues; the sequence is KEKQLNTANEPHEAN. Disordered stretches follow at residues 69-90 and 195-216; these read KEKQ…SAQS and RKRQ…LRTS. Residues 195 to 204 show a composition bias toward basic residues; it reads RKRQKKRARM. Residues 205–216 are compositionally biased toward basic and acidic residues; the sequence is KEKLDSKALRTS.

It belongs to the TLS1 family. Component of the spliceosome. Interacts with brr2.

Its subcellular location is the cytoplasm. It is found in the nucleus. Its function is as follows. Plays a role in pre-mRNA splicing by facilitating excision of introns featuring long spacing between the branchpoint and 3'-splice site. Assists the splicing of several components involved in chromatin organization, such as several shelterin complex subunits. This Schizosaccharomyces pombe (strain 972 / ATCC 24843) (Fission yeast) protein is Splicing factor tls1.